A 425-amino-acid polypeptide reads, in one-letter code: Serine--tRNA ligase (425 aa).

Residue 233-235 participates in L-serine binding; sequence TAE. 264-266 is an ATP binding site; it reads RRE. An L-serine-binding site is contributed by Glu287. 351 to 354 serves as a coordination point for ATP; the sequence is EISS. An L-serine-binding site is contributed by Ser387.

It belongs to the class-II aminoacyl-tRNA synthetase family. Type-1 seryl-tRNA synthetase subfamily. As to quaternary structure, homodimer. The tRNA molecule binds across the dimer.

The protein localises to the cytoplasm. The enzyme catalyses tRNA(Ser) + L-serine + ATP = L-seryl-tRNA(Ser) + AMP + diphosphate + H(+). It carries out the reaction tRNA(Sec) + L-serine + ATP = L-seryl-tRNA(Sec) + AMP + diphosphate + H(+). The protein operates within aminoacyl-tRNA biosynthesis; selenocysteinyl-tRNA(Sec) biosynthesis; L-seryl-tRNA(Sec) from L-serine and tRNA(Sec): step 1/1. In terms of biological role, catalyzes the attachment of serine to tRNA(Ser). Is also able to aminoacylate tRNA(Sec) with serine, to form the misacylated tRNA L-seryl-tRNA(Sec), which will be further converted into selenocysteinyl-tRNA(Sec). This is Serine--tRNA ligase from Thermotoga petrophila (strain ATCC BAA-488 / DSM 13995 / JCM 10881 / RKU-1).